Reading from the N-terminus, the 231-residue chain is Cytidylate kinase (231 aa).

18-26 (GPSGTGKSS) contacts ATP.

It belongs to the cytidylate kinase family. Type 1 subfamily.

The protein localises to the cytoplasm. It carries out the reaction CMP + ATP = CDP + ADP. It catalyses the reaction dCMP + ATP = dCDP + ADP. In Streptomyces avermitilis (strain ATCC 31267 / DSM 46492 / JCM 5070 / NBRC 14893 / NCIMB 12804 / NRRL 8165 / MA-4680), this protein is Cytidylate kinase.